Consider the following 264-residue polypeptide: 3-methyl-2-oxobutanoate hydroxymethyltransferase (264 aa).

Mg(2+) is bound by residues Asp-45 and Asp-84. 3-methyl-2-oxobutanoate contacts are provided by residues 45 to 46 (DS), Asp-84, and Lys-112. Glu-114 lines the Mg(2+) pocket. Glu-181 serves as the catalytic Proton acceptor.

The protein belongs to the PanB family. Homodecamer; pentamer of dimers. The cofactor is Mg(2+).

The protein localises to the cytoplasm. The enzyme catalyses 3-methyl-2-oxobutanoate + (6R)-5,10-methylene-5,6,7,8-tetrahydrofolate + H2O = 2-dehydropantoate + (6S)-5,6,7,8-tetrahydrofolate. The protein operates within cofactor biosynthesis; (R)-pantothenate biosynthesis; (R)-pantoate from 3-methyl-2-oxobutanoate: step 1/2. Its function is as follows. Catalyzes the reversible reaction in which hydroxymethyl group from 5,10-methylenetetrahydrofolate is transferred onto alpha-ketoisovalerate to form ketopantoate. This Vibrio cholerae serotype O1 (strain ATCC 39541 / Classical Ogawa 395 / O395) protein is 3-methyl-2-oxobutanoate hydroxymethyltransferase.